The following is a 299-amino-acid chain: uncharacterized protein (299 aa).

This is an uncharacterized protein from Mycobacterium tuberculosis (strain CDC 1551 / Oshkosh).